Reading from the N-terminus, the 111-residue chain is Probable 4-amino-4-deoxy-L-arabinose-phosphoundecaprenol flippase subunit ArnE (111 aa).

The Cytoplasmic portion of the chain corresponds to 1–35 (MIWLTLVFASLLSVAGQLCQKQATCFVAISKRRKH). Residues 36–56 (IVLWLGLALACLGLAMVLWLL) form a helical membrane-spanning segment. An EamA domain is found at 40–109 (LGLALACLGL…IIGGIVILGS (70 aa)). Topologically, residues 57–60 (VLQN) are periplasmic. Residues 61–81 (VPVGIAYPMLSLNFVWVTLAA) traverse the membrane as a helical segment. Over 82–87 (VKLWHE) the chain is Cytoplasmic. A helical membrane pass occupies residues 88 to 108 (PVSPRHWCGVAFIIGGIVILG). Over 109-111 (STV) the chain is Periplasmic.

It belongs to the ArnE family. In terms of assembly, heterodimer of ArnE and ArnF.

Its subcellular location is the cell inner membrane. The protein operates within bacterial outer membrane biogenesis; lipopolysaccharide biosynthesis. Functionally, translocates 4-amino-4-deoxy-L-arabinose-phosphoundecaprenol (alpha-L-Ara4N-phosphoundecaprenol) from the cytoplasmic to the periplasmic side of the inner membrane. The polypeptide is Probable 4-amino-4-deoxy-L-arabinose-phosphoundecaprenol flippase subunit ArnE (Escherichia coli O157:H7).